Reading from the N-terminus, the 432-residue chain is Enolase (432 aa).

Gln167 contributes to the (2R)-2-phosphoglycerate binding site. Catalysis depends on Glu209, which acts as the Proton donor. Residues Asp246, Glu290, and Asp317 each contribute to the Mg(2+) site. Lys342, Arg371, Ser372, and Lys393 together coordinate (2R)-2-phosphoglycerate. Lys342 serves as the catalytic Proton acceptor.

It belongs to the enolase family. Component of the RNA degradosome, a multiprotein complex involved in RNA processing and mRNA degradation. Mg(2+) is required as a cofactor.

The protein localises to the cytoplasm. It localises to the secreted. Its subcellular location is the cell surface. The enzyme catalyses (2R)-2-phosphoglycerate = phosphoenolpyruvate + H2O. Its pathway is carbohydrate degradation; glycolysis; pyruvate from D-glyceraldehyde 3-phosphate: step 4/5. Functionally, catalyzes the reversible conversion of 2-phosphoglycerate (2-PG) into phosphoenolpyruvate (PEP). It is essential for the degradation of carbohydrates via glycolysis. The protein is Enolase of Klebsiella pneumoniae (strain 342).